We begin with the raw amino-acid sequence, 234 residues long: Transcriptional regulatory protein WalR (234 aa).

Residues 3–116 enclose the Response regulatory domain; the sequence is KILIVDDEKP…ELQARVKALL (114 aa). 4-aspartylphosphate is present on Asp-52. Positions 133–232 form a DNA-binding region, ompR/PhoB-type; it reads PQPIQIGDLE…RRGVGYYMRN (100 aa).

As to quaternary structure, monomer. Homodimer. In terms of processing, phosphorylated by WalK; can also be dephosphorylated by WalK.

It localises to the cytoplasm. Member of the two-component regulatory system WalK/WalR that regulates genes involved in cell wall metabolism. Binds to the promoter region of the transcription factor fabT gene in the fabTH-acp operon in vitro. Inhibits transcription of fabT, probably acting in an unphosphorylated form, thereby playing a role in the regulation of fatty acid biosynthesis. Essential for normal growth in vitro. Required for maintaining normal cellular morphology, acting, at least in part, by regulating peptidoglycan hydrolase pcsB. Involved in maintaining expression of WalRK regulon genes in exponentially growing cells. This is Transcriptional regulatory protein WalR from Streptococcus pneumoniae serotype 2 (strain D39 / NCTC 7466).